Here is a 371-residue protein sequence, read N- to C-terminus: 2-aminoethylphosphonate--pyruvate transaminase (371 aa).

K198 carries the N6-(pyridoxal phosphate)lysine modification.

The protein belongs to the class-V pyridoxal-phosphate-dependent aminotransferase family. PhnW subfamily. Homodimer. Pyridoxal 5'-phosphate is required as a cofactor.

The enzyme catalyses (2-aminoethyl)phosphonate + pyruvate = phosphonoacetaldehyde + L-alanine. In terms of biological role, involved in phosphonate degradation. The protein is 2-aminoethylphosphonate--pyruvate transaminase of Syntrophobacter fumaroxidans (strain DSM 10017 / MPOB).